Here is a 119-residue protein sequence, read N- to C-terminus: Large ribosomal subunit protein bL20c (119 aa).

Belongs to the bacterial ribosomal protein bL20 family.

Its subcellular location is the plastid. The protein localises to the chloroplast. Its function is as follows. Binds directly to 23S ribosomal RNA and is necessary for the in vitro assembly process of the 50S ribosomal subunit. It is not involved in the protein synthesizing functions of that subunit. In Saccharum officinarum (Sugarcane), this protein is Large ribosomal subunit protein bL20c.